Reading from the N-terminus, the 105-residue chain is Fungal protease inhibitor-1 (105 aa).

The first 19 residues, 1 to 19 (MKAVITLLFLACILVVTYG), serve as a signal peptide directing secretion. Cystine bridges form between Cys-23/Cys-56, Cys-28/Cys-58, Cys-33/Cys-59, Cys-42/Cys-62, Cys-72/Cys-93, and Cys-87/Cys-98.

Inhibits proteases from the fungi A.oryzae and R.oryzae, trypsin and chymotrypsin. Does not inhibit protease from the bacterium B.licheniformis or papain. The sequence is that of Fungal protease inhibitor-1 from Antheraea mylitta (Tasar silkworm).